We begin with the raw amino-acid sequence, 592 residues long: Probable translation initiation factor IF-2 (592 aa).

A tr-type G domain is found at 5–226 (IRSPFVVVMG…AGVSQRFIPR (222 aa)). The tract at residues 14–21 (GHVDVGKT) is G1. 14–21 (GHVDVGKT) is a binding site for GTP. The G2 stretch occupies residues 39 to 43 (MITQH). The tract at residues 80–83 (DTPG) is G3. GTP contacts are provided by residues 80-84 (DTPGH) and 134-137 (NKLD). Residues 134–137 (NKLD) form a G4 region. The tract at residues 202–204 (SAV) is G5.

This sequence belongs to the TRAFAC class translation factor GTPase superfamily. Classic translation factor GTPase family. IF-2 subfamily.

In terms of biological role, function in general translation initiation by promoting the binding of the formylmethionine-tRNA to ribosomes. Seems to function along with eIF-2. This is Probable translation initiation factor IF-2 from Pyrobaculum calidifontis (strain DSM 21063 / JCM 11548 / VA1).